The sequence spans 295 residues: Ribosomal RNA small subunit methyltransferase A (295 aa).

Positions 28, 30, 55, 76, 101, and 131 each coordinate S-adenosyl-L-methionine.

This sequence belongs to the class I-like SAM-binding methyltransferase superfamily. rRNA adenine N(6)-methyltransferase family. RsmA subfamily.

Its subcellular location is the cytoplasm. It catalyses the reaction adenosine(1518)/adenosine(1519) in 16S rRNA + 4 S-adenosyl-L-methionine = N(6)-dimethyladenosine(1518)/N(6)-dimethyladenosine(1519) in 16S rRNA + 4 S-adenosyl-L-homocysteine + 4 H(+). Specifically dimethylates two adjacent adenosines (A1518 and A1519) in the loop of a conserved hairpin near the 3'-end of 16S rRNA in the 30S particle. May play a critical role in biogenesis of 30S subunits. In Pelotomaculum thermopropionicum (strain DSM 13744 / JCM 10971 / SI), this protein is Ribosomal RNA small subunit methyltransferase A.